The sequence spans 359 residues: NAC domain-containing protein 45 (359 aa).

The region spanning 19-185 (LPPGFRFHPT…EWVVCKVFHK (167 aa)) is the NAC domain. Residues 130–191 (VGMKKTLVFY…VFHKKGDDRE (62 aa)) mediate DNA binding.

Expressed in roots. Expressed at low levels in leaves, stems and panicles.

The protein resides in the nucleus. Transcription activator involved in responses to drought stress and salt stress. Transactivates the stress response genes LEA19 and PM19L. In Oryza sativa subsp. japonica (Rice), this protein is NAC domain-containing protein 45.